The sequence spans 366 residues: Galactoside alpha-(1,2)-fucosyltransferase 1 (366 aa).

Residues 1 to 8 (MWPLSHRH) lie on the Cytoplasmic side of the membrane. The chain crosses the membrane as a helical; Signal-anchor for type II membrane protein span at residues 9–25 (LCLAFLLVCVLSAISFF). Topologically, residues 26–366 (LHIHQDSFPH…LSPLWTLAEP (341 aa)) are lumenal. 3 N-linked (GlcNAc...) asparagine glycosylation sites follow: N66, N302, and N328.

The protein belongs to the glycosyltransferase 11 family.

The protein localises to the golgi apparatus. The protein resides in the golgi stack membrane. The enzyme catalyses a beta-D-galactosyl-(1-&gt;4)-N-acetyl-beta-D-glucosaminyl derivative + GDP-beta-L-fucose = an alpha-L-Fuc-(1-&gt;2)-beta-D-Gal-(1-&gt;4)-beta-D-GlcNAc derivative + GDP + H(+). It carries out the reaction a ganglioside GA1 + GDP-beta-L-fucose = a ganglioside Fuc-GA1 + GDP + H(+). It catalyses the reaction a beta-D-Gal-(1-&gt;3)-beta-D-GlcNAc-(1-&gt;3)-beta-D-Gal-(1-&gt;4)-beta-D-Glc-(1&lt;-&gt;1')-Cer(d18:1(4E)) + GDP-beta-L-fucose = alpha-L-fucosyl-(1-&gt;2)- beta-D-galactosyl-(1-&gt;3)-N-acetyl-beta-D-glucosaminyl-(1-&gt;3)-beta-D-galactosyl-(1-&gt;4)-beta-D-glucosyl-(1&lt;-&gt;1')-N-acylsphing-4-enine + GDP + H(+). The catalysed reaction is a neolactoside nLc4Cer(d18:1(4E)) + GDP-beta-L-fucose = a neolactoside IV(2)-alpha-Fuc-nLc4Cer(d18:1(4E)) + GDP + H(+). The enzyme catalyses a ganglioside GM1 + GDP-beta-L-fucose = a ganglioside Fuc-GM1 + GDP + H(+). It carries out the reaction beta-D-galactosyl-(1-&gt;3)-N-acetyl-D-galactosamine + GDP-beta-L-fucose = alpha-L-fucosyl-(1-&gt;2)-beta-D-galactosyl-(1-&gt;3)-N-acetyl-D-galactosamine + GDP + H(+). Its pathway is protein modification; protein glycosylation. Its function is as follows. Catalyzes the transfer of L-fucose, from a guanosine diphosphate-beta-L-fucose, to the terminal galactose residue of glycoconjugates through an alpha(1,2) linkage leading to H antigen synthesis that is an intermediate substrate in the synthesis of ABO blood group antigens. H antigen is essential for maturation of the glomerular layer of the main olfactory bulb, in cell migration and early cell-cell contacts during tumor associated angiogenesis. Preferentially fucosylates soluble lactose and to a lesser extent fucosylates glycolipids gangliosides GA1 and GM1a. This is Galactoside alpha-(1,2)-fucosyltransferase 1 from Lagothrix lagotricha (Brown woolly monkey).